The chain runs to 199 residues: Recombination protein RecR (199 aa).

Residues Cys57 to Cys72 form a C4-type zinc finger. In terms of domain architecture, Toprim spans Arg80 to Pro175.

The protein belongs to the RecR family.

Its function is as follows. May play a role in DNA repair. It seems to be involved in an RecBC-independent recombinational process of DNA repair. It may act with RecF and RecO. In Carboxydothermus hydrogenoformans (strain ATCC BAA-161 / DSM 6008 / Z-2901), this protein is Recombination protein RecR.